The primary structure comprises 336 residues: Ribose-phosphate pyrophosphokinase (336 aa).

ATP is bound by residues 43–45 (DQE) and 102–103 (RQ). Mg(2+)-binding residues include H136 and D178. The active site involves K201. D-ribose 5-phosphate is bound by residues R203, D227, and 231–235 (DTAGT).

Belongs to the ribose-phosphate pyrophosphokinase family. Class I subfamily. In terms of assembly, homohexamer. It depends on Mg(2+) as a cofactor.

Its subcellular location is the cytoplasm. It carries out the reaction D-ribose 5-phosphate + ATP = 5-phospho-alpha-D-ribose 1-diphosphate + AMP + H(+). The protein operates within metabolic intermediate biosynthesis; 5-phospho-alpha-D-ribose 1-diphosphate biosynthesis; 5-phospho-alpha-D-ribose 1-diphosphate from D-ribose 5-phosphate (route I): step 1/1. Its function is as follows. Involved in the biosynthesis of the central metabolite phospho-alpha-D-ribosyl-1-pyrophosphate (PRPP) via the transfer of pyrophosphoryl group from ATP to 1-hydroxyl of ribose-5-phosphate (Rib-5-P). The polypeptide is Ribose-phosphate pyrophosphokinase (Cereibacter sphaeroides (strain KD131 / KCTC 12085) (Rhodobacter sphaeroides)).